The following is a 151-amino-acid chain: Ribosome maturation factor RimP (151 aa).

This sequence belongs to the RimP family.

Its subcellular location is the cytoplasm. Required for maturation of 30S ribosomal subunits. The polypeptide is Ribosome maturation factor RimP (Shewanella baltica (strain OS223)).